The following is a 2575-amino-acid chain: Non-reducing polyketide synthase pks11 (2575 aa).

The 140-residue stretch at 89-228 (LANIILSPLV…ASKTVSTLQG (140 aa)) folds into the Starter acyltransferase (SAT) domain. C129 functions as the Nucleophile; for transacylase activity in the catalytic mechanism. Catalysis depends on H247, which acts as the Proton donor/acceptor; for transacylase activity. A Ketosynthase family 3 (KS3) domain is found at 373–790 (EDDIAVVGMS…GSNASAVVTE (418 aa)). Residues C538, H673, and H713 each act as for beta-ketoacyl synthase activity in the active site. The Malonyl-CoA:ACP transacylase (MAT) domain maps to 901-1192 (FGGQISTYVG…TNMASRALGS (292 aa)). Residues 1276–1409 (PKGLWSFIDY…GQIIFVSTDN (134 aa)) form an N-terminal hotdog fold region. The PKS/mFAS DH domain maps to 1276-1586 (PKGLWSFIDY…YHKVAKATMS (311 aa)). Residues 1307–1584 (LVSGHIIAQT…VNYHKVAKAT (278 aa)) form a product template (PT) domain region. H1311 serves as the catalytic Proton acceptor; for dehydratase activity. The segment at 1437 to 1586 (ADDIIQGRNI…YHKVAKATMS (150 aa)) is C-terminal hotdog fold. The active-site Proton donor; for dehydratase activity is the D1493. Residues 1597 to 1606 (TTSTSTNVKS) show a composition bias toward polar residues. The disordered stretch occupies residues 1597-1636 (TTSTSTNVKSSPAAAEGSSPVENGASGSGSKAKKTKSGAG). In terms of domain architecture, Carrier spans 1637 to 1711 (QDVVNKTKGL…GLVQIIKSTL (75 aa)). Residue S1671 is modified to O-(pantetheine 4'-phosphoryl)serine. Positions 1713–1762 (VSDDEEGSDQEGSEASSSESSTTFTPSTTATTVSDVEDNGNEKSIGKEKS) are disordered. Positions 1714-1724 (SDDEEGSDQEG) are enriched in acidic residues. Low complexity predominate over residues 1725-1746 (SEASSSESSTTFTPSTTATTVS). Residues 1752-1762 (GNEKSIGKEKS) show a composition bias toward basic and acidic residues. Residues 1835 to 2130 (LTRIPHDPQH…HIDWTDGNSP (296 aa)) are methyltransferase domain. The 245-residue stretch at 2204 to 2448 (ITGATGSLGS…LCWTPVDDVA (245 aa)) folds into the Thioester reductase (TE) domain.

Pantetheine 4'-phosphate serves as cofactor.

It participates in secondary metabolite biosynthesis. Non-reducing polyketide synthase; part of the gene cluster that mediates the biosynthesis of mitorubrinol and mitorubrinic acid, two virulence factors that improve T.marneffei intracellular survival in macrophages. The two polyketide synthases pks12 and pks11 are probably responsible for sequential use in the biosynthesis of mitorubrinol and mitorubrinic acid. The first part of the biosynthesis is probably catalyzed by pks12, which synthesized orsellinic acid. This tetraketide is then used as a starter unit for pks11, which possesses a SAT domain, in the second part of the biosynthesis. Pks11, contains a methyltransferase domain, also served that methylates the products, using a methyl group from S-adenosylmethionine. This Talaromyces marneffei (Penicillium marneffei) protein is Non-reducing polyketide synthase pks11.